The sequence spans 551 residues: Glucose-6-phosphate isomerase (551 aa).

The Proton donor role is filled by E349. Residues H378 and K480 contribute to the active site.

The protein belongs to the GPI family.

The protein localises to the cytoplasm. It carries out the reaction alpha-D-glucose 6-phosphate = beta-D-fructose 6-phosphate. Its pathway is carbohydrate biosynthesis; gluconeogenesis. It participates in carbohydrate degradation; glycolysis; D-glyceraldehyde 3-phosphate and glycerone phosphate from D-glucose: step 2/4. Functionally, catalyzes the reversible isomerization of glucose-6-phosphate to fructose-6-phosphate. This is Glucose-6-phosphate isomerase from Parasynechococcus marenigrum (strain WH8102).